Consider the following 250-residue polypeptide: 3-deoxy-manno-octulosonate cytidylyltransferase (250 aa).

Belongs to the KdsB family.

The protein localises to the cytoplasm. It carries out the reaction 3-deoxy-alpha-D-manno-oct-2-ulosonate + CTP = CMP-3-deoxy-beta-D-manno-octulosonate + diphosphate. Its pathway is nucleotide-sugar biosynthesis; CMP-3-deoxy-D-manno-octulosonate biosynthesis; CMP-3-deoxy-D-manno-octulosonate from 3-deoxy-D-manno-octulosonate and CTP: step 1/1. The protein operates within bacterial outer membrane biogenesis; lipopolysaccharide biosynthesis. In terms of biological role, activates KDO (a required 8-carbon sugar) for incorporation into bacterial lipopolysaccharide in Gram-negative bacteria. The chain is 3-deoxy-manno-octulosonate cytidylyltransferase from Bacteroides thetaiotaomicron (strain ATCC 29148 / DSM 2079 / JCM 5827 / CCUG 10774 / NCTC 10582 / VPI-5482 / E50).